We begin with the raw amino-acid sequence, 303 residues long: Glycine--tRNA ligase alpha subunit (303 aa).

Belongs to the class-II aminoacyl-tRNA synthetase family. As to quaternary structure, tetramer of two alpha and two beta subunits.

The protein localises to the cytoplasm. It catalyses the reaction tRNA(Gly) + glycine + ATP = glycyl-tRNA(Gly) + AMP + diphosphate. This is Glycine--tRNA ligase alpha subunit (glyQ) from Helicobacter pylori (strain ATCC 700392 / 26695) (Campylobacter pylori).